Here is a 698-residue protein sequence, read N- to C-terminus: Endogenous retrovirus group K member 9 Env polyprotein (698 aa).

Positions 1–47 (MNPSEMQRKAPPRRRRHRNRAPLTHKMNKMVTSEEQMKLPSTKKAEP) are disordered. A signal peptide spans 1 to 89 (MNPSEMQRKA…ALMIVSMVVS (89 aa)). Over residues 10-20 (APPRRRRHRNR) the composition is skewed to basic residues. At 90 to 631 (LPMPAGAAAA…NLNPVTWVKT (542 aa)) the chain is on the extracellular side. 7 N-linked (GlcNAc...) asparagine glycosylation sites follow: Asn100, Asn128, Asn153, Asn273, Asn354, Asn371, and Asn460. The tract at residues 465-485 (FIFTLIAVIMGLIAVTATAAV) is fusion peptide. N-linked (GlcNAc...) asparagine glycosylation is found at Asn506, Asn553, Asn565, and Asn584. Residues 632–652 (IGSTTIINLILILVCLFCLLL) form a helical membrane-spanning segment. Residues 653 to 698 (VCRCTQQLRRDSDHRERAMMTMAVLSKRKGGNVGKSKRDQIVTVSV) are Cytoplasmic-facing.

The protein belongs to the beta type-B retroviral envelope protein family. HERV class-II K(HML-2) env subfamily. In terms of assembly, the surface (SU) and transmembrane (TM) proteins form a heterodimer. SU and TM are attached by noncovalent interactions or by a labile interchain disulfide bond. In terms of processing, specific enzymatic cleavages in vivo yield the mature SU and TM proteins.

It is found in the cell membrane. It localises to the virion. In terms of biological role, retroviral envelope proteins mediate receptor recognition and membrane fusion during early infection. Endogenous envelope proteins may have kept, lost or modified their original function during evolution. This endogenous envelope protein has lost its original fusogenic properties. SU mediates receptor recognition. Its function is as follows. TM anchors the envelope heterodimer to the viral membrane through one transmembrane domain. The other hydrophobic domain, called fusion peptide, mediates fusion of the viral membrane with the target cell membrane. The chain is Endogenous retrovirus group K member 9 Env polyprotein (ERVK-9) from Homo sapiens (Human).